We begin with the raw amino-acid sequence, 1077 residues long: Disheveled-associated activator of morphogenesis 1 (1077 aa).

At serine 34 the chain carries Phosphoserine. Residues 45-420 form the GBD/FH3 domain; sequence LPMPPVEELD…QIVIQNDKGQ (376 aa). Positions 437 to 526 form a coiled coil; that stretch reads RMLVNENEVK…ELNRRAVCAA (90 aa). Disordered stretches follow at residues 457–478 and 526–596; these read KEHN…AKTQ and AVPG…PVSL. Positions 528-599 constitute an FH1 domain; that stretch reads PGGPSPGAPG…PGAPVSLTLK (72 aa). 2 stretches are compositionally biased toward pro residues: residues 530–539 and 549–592; these read GPSPGAPGGP and LPPP…PPGA. The FH2 domain maps to 600-1008; sequence KKNIPQPTNA…EERRARLEAQ (409 aa). Positions 693–702 are actin-binding; it reads QNCNILLSRL. Basic and acidic residues predominate over residues 1007-1026; the sequence is AQLKEQRERERKVRKAKESS. Disordered regions lie at residues 1007-1033 and 1056-1077; these read AQLK…GEFD and RKRI…KLNF. A phosphoserine mark is found at serine 1026 and serine 1029. A DAD domain is found at 1026–1057; it reads SEESGEFDDLVSALRSGEVFDKDLSKLKRNRK. The segment covering 1066–1077 has biased composition (basic and acidic residues); the sequence is SSRERPITKLNF.

Belongs to the formin homology family. Interacts with CIP4, FNBP1 and FNBP1L. Interacts with the SH3 domains of Abl, BTK, endophilin, spectrin and SRC. Binds specifically to GTP-bound CDC42 and RHOA. Interacts with INTU; INTU mediates the indirect interaction between DAAM1 and NPHP4. Interacts (via coiled coil domain) with KANK1 (via coiled coil domain). As to expression, in early embryogenesis, expressed in embryonic and extraembryonic ectoderm. In later stages of gastrulation, expressed also in somites and ribs and posterior vertebrae of developing skeletal system. During organogenesis, expressed in CNS, PNS, stomach, liver and limb bud.

It is found in the cytoplasm. The protein localises to the cytoskeleton. The protein resides in the cilium basal body. Functionally, binds to disheveled (Dvl) and Rho, and mediates Wnt-induced Dvl-Rho complex formation. May play a role as a scaffolding protein to recruit Rho-GDP and Rho-GEF, thereby enhancing Rho-GTP formation. Can direct nucleation and elongation of new actin filaments. Involved in building functional cilia. Involved in the organization of the subapical actin network in multiciliated epithelial cells. Together with DAAM2, required for myocardial maturation and sarcomere assembly. During cell division, may regulate RHOA activation that signals spindle orientation and chromosomal segregation. The protein is Disheveled-associated activator of morphogenesis 1 (Daam1) of Mus musculus (Mouse).